A 185-amino-acid polypeptide reads, in one-letter code: NAD(P)H-dependent FMN reductase PA1204 (185 aa).

Residues 13 to 20 (SLRSGSYN) and 81 to 83 (YNY) each bind FMN. 115–122 (SAGRFGTA) contacts NAD(+).

The protein belongs to the SsuE family. Homodimer. FMN serves as cofactor.

Functionally, has NAD(P)H-dependent FMN reductase activity. The chain is NAD(P)H-dependent FMN reductase PA1204 from Pseudomonas aeruginosa (strain ATCC 15692 / DSM 22644 / CIP 104116 / JCM 14847 / LMG 12228 / 1C / PRS 101 / PAO1).